A 416-amino-acid polypeptide reads, in one-letter code: Lipid phosphate phosphatase delta (416 aa).

Transmembrane regions (helical) follow at residues phenylalanine 72 to leucine 92 and methionine 104 to alanine 124. Residues lysine 119 to proline 127 are phosphatase sequence motif I. The segment at proline 151–histidine 154 is phosphatase sequence motif II. The active-site Proton donor is the histidine 154. A helical transmembrane segment spans residues valine 178–glycine 198. The tract at residues glycine 198–aspartate 209 is phosphatase sequence motif III. Histidine 205 serves as the catalytic Nucleophile. 5 helical membrane-spanning segments follow: residues valine 207–valine 227, valine 241–histidine 261, tyrosine 266–threonine 286, glutamate 302–valine 322, and phenylalanine 393–tyrosine 413.

Belongs to the type 2 lipid phosphate phosphatase family.

It is found in the endoplasmic reticulum membrane. In terms of biological role, functions as a sphingoid long-chain base phosphate (LCBP) phosphatase. May play a role in the regulation of LCBP levels and be involved in stomatal responses through LCBP-mediated ABA signaling. The protein is Lipid phosphate phosphatase delta (LPPD) of Arabidopsis thaliana (Mouse-ear cress).